Consider the following 203-residue polypeptide: ATP-dependent Clp protease proteolytic subunit 1 (203 aa).

Ser98 functions as the Nucleophile in the catalytic mechanism. His123 is an active-site residue.

Belongs to the peptidase S14 family. In terms of assembly, fourteen ClpP subunits assemble into 2 heptameric rings which stack back to back to give a disk-like structure with a central cavity, resembling the structure of eukaryotic proteasomes.

Its subcellular location is the cytoplasm. It catalyses the reaction Hydrolysis of proteins to small peptides in the presence of ATP and magnesium. alpha-casein is the usual test substrate. In the absence of ATP, only oligopeptides shorter than five residues are hydrolyzed (such as succinyl-Leu-Tyr-|-NHMec, and Leu-Tyr-Leu-|-Tyr-Trp, in which cleavage of the -Tyr-|-Leu- and -Tyr-|-Trp bonds also occurs).. Functionally, cleaves peptides in various proteins in a process that requires ATP hydrolysis. Has a chymotrypsin-like activity. Plays a major role in the degradation of misfolded proteins. In Chlamydia felis (strain Fe/C-56) (Chlamydophila felis), this protein is ATP-dependent Clp protease proteolytic subunit 1.